We begin with the raw amino-acid sequence, 90 residues long: Small cell adhesion glycoprotein homolog (90 aa).

Over Met-1 to Lys-27 the chain is Extracellular. The chain crosses the membrane as a helical; Signal-anchor for type III membrane protein span at residues Ala-28–Ile-48. The Cytoplasmic portion of the chain corresponds to Thr-49–Met-90.

The protein belongs to the SMAGP family.

Its subcellular location is the cell membrane. It is found in the cytoplasmic vesicle membrane. Functionally, may play a role in epithelial cell-cell contacts. This is Small cell adhesion glycoprotein homolog (smagp) from Xenopus tropicalis (Western clawed frog).